A 604-amino-acid chain; its full sequence is UvrABC system protein C (604 aa).

A GIY-YIG domain is found at 14 to 91 (ESPGVYRMLD…IKEQRPPYNI (78 aa)). A UVR domain is found at 202–237 (EQVTAQLTRDMETASQALDFEEAARLRDQIQQLRRL). The interval 538-557 (GHRQQRDKQRRTSTLQDIPG) is disordered.

It belongs to the UvrC family. As to quaternary structure, interacts with UvrB in an incision complex.

The protein localises to the cytoplasm. Its function is as follows. The UvrABC repair system catalyzes the recognition and processing of DNA lesions. UvrC both incises the 5' and 3' sides of the lesion. The N-terminal half is responsible for the 3' incision and the C-terminal half is responsible for the 5' incision. In Chromohalobacter salexigens (strain ATCC BAA-138 / DSM 3043 / CIP 106854 / NCIMB 13768 / 1H11), this protein is UvrABC system protein C.